Consider the following 217-residue polypeptide: Methylthioribulose-1-phosphate dehydratase (217 aa).

2 residues coordinate Zn(2+): His106 and His108.

The protein belongs to the aldolase class II family. MtnB subfamily. Zn(2+) serves as cofactor.

It catalyses the reaction 5-(methylsulfanyl)-D-ribulose 1-phosphate = 5-methylsulfanyl-2,3-dioxopentyl phosphate + H2O. The protein operates within amino-acid biosynthesis; L-methionine biosynthesis via salvage pathway; L-methionine from S-methyl-5-thio-alpha-D-ribose 1-phosphate: step 2/6. Functionally, catalyzes the dehydration of methylthioribulose-1-phosphate (MTRu-1-P) into 2,3-diketo-5-methylthiopentyl-1-phosphate (DK-MTP-1-P). The polypeptide is Methylthioribulose-1-phosphate dehydratase (Xanthomonas campestris pv. campestris (strain 8004)).